Reading from the N-terminus, the 326-residue chain is Apoptosis facilitator Bcl-2-like protein 14 (326 aa).

S44 is modified (phosphoserine). The disordered stretch occupies residues 99 to 127 (TEKEEEPPSSPKEIHAQGPFPVERQGRNQ). Positions 211 to 225 (IVELLKYSGDQLGRE) match the BH3 motif. Residues 307 to 314 (WVQQNGGW) carry the BH2 motif.

Belongs to the Bcl-2 family. Post-translationally, phosphorylated by MELK, leading to inhibit its pro-apoptotic function.

The protein localises to the cytoplasm. In terms of biological role, plays a role in apoptosis. This is Apoptosis facilitator Bcl-2-like protein 14 (Bcl2l14) from Rattus norvegicus (Rat).